The sequence spans 569 residues: Proline--tRNA ligase (569 aa).

The protein belongs to the class-II aminoacyl-tRNA synthetase family. ProS type 1 subfamily. Homodimer.

It is found in the cytoplasm. The enzyme catalyses tRNA(Pro) + L-proline + ATP = L-prolyl-tRNA(Pro) + AMP + diphosphate. In terms of biological role, catalyzes the attachment of proline to tRNA(Pro) in a two-step reaction: proline is first activated by ATP to form Pro-AMP and then transferred to the acceptor end of tRNA(Pro). As ProRS can inadvertently accommodate and process non-cognate amino acids such as alanine and cysteine, to avoid such errors it has two additional distinct editing activities against alanine. One activity is designated as 'pretransfer' editing and involves the tRNA(Pro)-independent hydrolysis of activated Ala-AMP. The other activity is designated 'posttransfer' editing and involves deacylation of mischarged Ala-tRNA(Pro). The misacylated Cys-tRNA(Pro) is not edited by ProRS. The chain is Proline--tRNA ligase from Lactiplantibacillus plantarum (strain ATCC BAA-793 / NCIMB 8826 / WCFS1) (Lactobacillus plantarum).